A 358-amino-acid polypeptide reads, in one-letter code: Electron transfer flavoprotein subunit alpha, mitochondrial (358 aa).

298–326 (LYMAFGVSGAIQHLAGMRDSKVIVAVNKD) lines the FAD pocket.

It belongs to the ETF alpha-subunit/FixB family. As to quaternary structure, heterodimer of an alpha and a beta subunit. FAD is required as a cofactor.

The protein localises to the mitochondrion matrix. The electron transfer flavoprotein serves as a specific electron acceptor for several dehydrogenases, including five acyl-CoA dehydrogenases, glutaryl-CoA and sarcosine dehydrogenase. It transfers the electrons to the main mitochondrial respiratory chain via ETF-ubiquinone oxidoreductase (ETF dehydrogenase). This Oryza sativa subsp. indica (Rice) protein is Electron transfer flavoprotein subunit alpha, mitochondrial (ETFA).